The chain runs to 421 residues: Serine hydroxymethyltransferase (421 aa).

(6S)-5,6,7,8-tetrahydrofolate is bound by residues L121 and 125-127 (GHL). An N6-(pyridoxal phosphate)lysine modification is found at K229.

Belongs to the SHMT family. Homodimer. The cofactor is pyridoxal 5'-phosphate.

It localises to the cytoplasm. The catalysed reaction is (6R)-5,10-methylene-5,6,7,8-tetrahydrofolate + glycine + H2O = (6S)-5,6,7,8-tetrahydrofolate + L-serine. Its pathway is one-carbon metabolism; tetrahydrofolate interconversion. It functions in the pathway amino-acid biosynthesis; glycine biosynthesis; glycine from L-serine: step 1/1. Its function is as follows. Catalyzes the reversible interconversion of serine and glycine with tetrahydrofolate (THF) serving as the one-carbon carrier. This reaction serves as the major source of one-carbon groups required for the biosynthesis of purines, thymidylate, methionine, and other important biomolecules. Also exhibits THF-independent aldolase activity toward beta-hydroxyamino acids, producing glycine and aldehydes, via a retro-aldol mechanism. This chain is Serine hydroxymethyltransferase, found in Haemophilus influenzae (strain ATCC 51907 / DSM 11121 / KW20 / Rd).